Consider the following 561-residue polypeptide: Dihydroxy-acid dehydratase (561 aa).

C50 serves as a coordination point for [2Fe-2S] cluster. Residue D82 participates in Mg(2+) binding. C123 contributes to the [2Fe-2S] cluster binding site. Mg(2+)-binding residues include D124 and K125. Position 125 is an N6-carboxylysine (K125). Residue C195 coordinates [2Fe-2S] cluster. E447 is a Mg(2+) binding site. S473 serves as the catalytic Proton acceptor.

The protein belongs to the IlvD/Edd family. Homodimer. It depends on [2Fe-2S] cluster as a cofactor. Mg(2+) is required as a cofactor.

The enzyme catalyses (2R)-2,3-dihydroxy-3-methylbutanoate = 3-methyl-2-oxobutanoate + H2O. The catalysed reaction is (2R,3R)-2,3-dihydroxy-3-methylpentanoate = (S)-3-methyl-2-oxopentanoate + H2O. It participates in amino-acid biosynthesis; L-isoleucine biosynthesis; L-isoleucine from 2-oxobutanoate: step 3/4. Its pathway is amino-acid biosynthesis; L-valine biosynthesis; L-valine from pyruvate: step 3/4. Functions in the biosynthesis of branched-chain amino acids. Catalyzes the dehydration of (2R,3R)-2,3-dihydroxy-3-methylpentanoate (2,3-dihydroxy-3-methylvalerate) into 2-oxo-3-methylpentanoate (2-oxo-3-methylvalerate) and of (2R)-2,3-dihydroxy-3-methylbutanoate (2,3-dihydroxyisovalerate) into 2-oxo-3-methylbutanoate (2-oxoisovalerate), the penultimate precursor to L-isoleucine and L-valine, respectively. This Microcystis aeruginosa (strain NIES-843 / IAM M-2473) protein is Dihydroxy-acid dehydratase.